Consider the following 313-residue polypeptide: tRNA pseudouridine synthase B (313 aa).

D48 acts as the Nucleophile in catalysis.

Belongs to the pseudouridine synthase TruB family. Type 1 subfamily.

It carries out the reaction uridine(55) in tRNA = pseudouridine(55) in tRNA. In terms of biological role, responsible for synthesis of pseudouridine from uracil-55 in the psi GC loop of transfer RNAs. The protein is tRNA pseudouridine synthase B of Saccharophagus degradans (strain 2-40 / ATCC 43961 / DSM 17024).